The chain runs to 778 residues: Probable potassium transporter 13 (778 aa).

Topologically, residues 1 to 28 (MDVEGGGGGGGGAPPRGRNSWGWQKGTL) are cytoplasmic. A helical membrane pass occupies residues 29 to 49 (LLAYQSFGVVYGDLCISPVYV). The Extracellular portion of the chain corresponds to 50 to 72 (YKNTFSGKLRLHEEDEEILGVLS). A helical membrane pass occupies residues 73-93 (LVFWSLTLIPLLKYIILVLGA). The Cytoplasmic segment spans residues 94–156 (DDNGEGGTFA…AFFEKHYSLR (63 aa)). A helical membrane pass occupies residues 157 to 177 (VVLLLFVLMGTSMVIGDGVLT). Topologically, residues 178 to 199 (PTMSVLAAVSGLRIKFPELHEN) are extracellular. A glycan (N-linked (GlcNAc...) asparagine) is linked at Asn199. Residues 200 to 220 (YTVLLACVILIGLFALQHYGT) traverse the membrane as a helical segment. Residues 221–222 (RR) are Cytoplasmic-facing. Residues 223 to 243 (VGFLFAPILISWLTCIGGIGI) form a helical membrane-spanning segment. Topologically, residues 244–276 (YNIIKWNPSVIRALSPYYIYNFFRKAGKDGWSS) are extracellular. A helical membrane pass occupies residues 277–297 (LGGIVLCLTGAEAMFADLGHF). Over 298–303 (SKLSLR) the chain is Cytoplasmic. A helical membrane pass occupies residues 304-324 (LGFTIVVYPCLVLAYMGEAAY). The Extracellular portion of the chain corresponds to 325–343 (LSKHREDLQSSFYKALPDR). Residues 344–364 (VFWPVLFIATLATAVGSQAII) form a helical membrane-spanning segment. The Cytoplasmic segment spans residues 365 to 395 (SATFSIISQCRALGCFPRIKVVHTSSHVHGQ). A helical transmembrane segment spans residues 396-416 (IYIPEVNWVLMSLCLAVTIGF). The Extracellular portion of the chain corresponds to 417 to 424 (RDTEMIGN). A helical transmembrane segment spans residues 425–445 (AYGLAVILVMCATTCLMFLVI). Topologically, residues 446-451 (TTVWNR) are cytoplasmic. Residues 452-472 (WVVWAAAFTVVFGSVELLYLS) traverse the membrane as a helical segment. Topologically, residues 473–477 (ACLAK) are extracellular. The helical transmembrane segment at 478–498 (VPHGGWLPLLLSLTTLLVMST) threads the bilayer. The Cytoplasmic segment spans residues 499–778 (WHYGTAMKQQ…LIEVGMAYRV (280 aa)). Polar residues predominate over residues 655-677 (PATSSSGGSNQHAFDAGTTTSSC). Positions 655-704 (PATSSSGGSNQHAFDAGTTTSSCEIDATAGGGGRRKVRFDNDGGGGGEEE) are disordered.

It belongs to the HAK/KUP transporter (TC 2.A.72.3) family.

Its subcellular location is the membrane. Functionally, high-affinity potassium transporter. This Oryza sativa subsp. japonica (Rice) protein is Probable potassium transporter 13 (HAK13).